The primary structure comprises 357 residues: MKLADFDFDLPEEAIALRPANPRDAARLLLVEPGQDFRDLAVRDLPGLLRAGDVLVLNDTRVIPARLKGVRTREGSRVAVEATLHQRKAGHVWTAFMRPGKRLAPGDRVSFGETDDRACFLGALDATVKEKGEGGEVTLAFDLSGPDLDAAIAERGAMPLPPYIAAKRAEDEQDRADYQTVYAEEDGSVAAPTAGLHFTPELLARLAQAGVTTERVTLHVGAGTFLPVKTEDISEHRMHAEWGEVDAATADRLNAARAAGGRIVCVGTTSLRLLESAAGEDGVVRPFRDETAIFITPGYRFRAADGLMTNFHLPKSTLFMLVCAFAGTDTMRAAYRHAIETGYRFYSYGDSSLLWRA.

The protein belongs to the QueA family. As to quaternary structure, monomer.

The protein resides in the cytoplasm. It catalyses the reaction 7-aminomethyl-7-carbaguanosine(34) in tRNA + S-adenosyl-L-methionine = epoxyqueuosine(34) in tRNA + adenine + L-methionine + 2 H(+). It functions in the pathway tRNA modification; tRNA-queuosine biosynthesis. Functionally, transfers and isomerizes the ribose moiety from AdoMet to the 7-aminomethyl group of 7-deazaguanine (preQ1-tRNA) to give epoxyqueuosine (oQ-tRNA). This is S-adenosylmethionine:tRNA ribosyltransferase-isomerase from Phenylobacterium zucineum (strain HLK1).